Here is a 550-residue protein sequence, read N- to C-terminus: Membrane-bound alkaline phosphatase (550 aa).

Residues 1-39 form the signal peptide; that stretch reads MSTWWLVVVAAAAAAGLVRAEDRYHPERLAAGEASAATR. Aspartate 83 is a Mg(2+) binding site. Aspartate 83 is a binding site for Zn(2+). Serine 133 (phosphoserine intermediate) is an active-site residue. Histidine 196, serine 198, and glutamate 356 together coordinate Mg(2+). Zn(2+) contacts are provided by aspartate 361, histidine 365, aspartate 402, histidine 403, and histidine 479. Residue serine 524 is the site of GPI-anchor amidated serine attachment. Residues 525 to 550 constitute a propeptide, removed in mature form; the sequence is AATVPTAALLSLLLAAFITLRHQCFL.

The protein belongs to the alkaline phosphatase family. The cofactor is Mg(2+). It depends on Zn(2+) as a cofactor. In terms of tissue distribution, midgut.

It is found in the cell membrane. The catalysed reaction is a phosphate monoester + H2O = an alcohol + phosphate. This is Membrane-bound alkaline phosphatase (Alp-m) from Bombyx mori (Silk moth).